The sequence spans 7354 residues: Microtubule-actin cross-linking factor 1, isoforms 1/2/3/4 (7354 aa).

The tract at residues 1–47 (MSSSDEETLSERSCRSERSCRSERSYRSERSGSLSPCPPGDTLPWNL) is disordered. The actin-binding stretch occupies residues 1–295 (MSSSDEETLS…VITYVSSIYD (295 aa)). Serine 4 carries the post-translational modification Phosphoserine. Basic and acidic residues predominate over residues 9–30 (LSERSCRSERSCRSERSYRSER). Serine 35 is modified (phosphoserine). At threonine 42 the chain carries Phosphothreonine. Serine 57 carries the phosphoserine modification. Calponin-homology (CH) domains lie at 78 to 181 (RVQK…LHFQ) and 194 to 298 (MSAK…DAFP). One copy of the LRR 1 repeat lies at 148–171 (QRQVKLVNIRNDDITDGNPKLTLG). At serine 280 the chain carries Phosphoserine. LRR repeat units lie at residues 377-399 (LYKL…YHPN) and 441-464 (LNCE…LESG). The SH3 domain occupies 868 to 925 (KSTLSVKAICDYRQIEITICKNDECVLEDNSQRTKWKVISPTGNEAMVPSVCFLIPPP). The stretch at 1050-1073 (ISELKNIRLLLEECEQRLLKQIQS) is one LRR 5 repeat. A Phosphoserine modification is found at serine 1122. LRR repeat units lie at residues 1128–1154 (ATTL…VYLN), 1187–1210 (PADL…VKDK), and 1257–1282 (HRVI…DYRA). Residues serine 1367 and serine 1376 each carry the phosphoserine modification. Plectin repeat units lie at residues 1577–1619 (LVLL…QLLG), 1654–1696 (LKVL…ELQS), 1769–1809 (RLLE…CAIL), 1811–1848 (RQLQ…VILE), and 1855–1885 (GLLL…HKIL). A phosphoserine mark is found at serine 2051, serine 2077, and serine 2081. 2 stretches are compositionally biased toward basic and acidic residues: residues 2120–2131 (KEEQAETLREEN) and 2145–2155 (SEGKDLSTEKS). The interval 2120 to 2155 (KEEQAETLREENISGDPLLVECPEESEGKDLSTEKS) is disordered. 5 Plectin repeats span residues 2276–2316 (STLS…VKLM), 2352–2393 (NVLM…RILE), 2394–2425 (GQVI…DTAD), 2487–2528 (LLTK…LRKV), and 2671–2715 (LKVL…ASHQ). Disordered regions lie at residues 2806-2841 (AGIR…DSKV), 2951-2978 (EMGG…EVTI), and 3058-3099 (SQET…HISK). The segment covering 2812–2837 (NGEKAEKGRKISVEMEGQRQDEKASS) has biased composition (basic and acidic residues). Residues 2968–2978 (SEEESDQEVTI) show a composition bias toward acidic residues. Phosphoserine is present on residues serine 3082 and serine 3085. LRR repeat units follow at residues 3225-3244 (VGQR…LPTR), 3606-3630 (SGKS…IQSH), and 3657-3681 (LTAL…TRVA). Spectrin repeat units follow at residues 3845–3920 (ELQK…NFEE) and 3962–4070 (QYQQ…ALLQ). Serine 3889 bears the Phosphoserine mark. One copy of the LRR 12 repeat lies at 3898-3920 (KGDLRFVTISGQKVLETENNFEE). 2 LRR repeats span residues 4087 to 4112 (LQSI…VIQE) and 4223 to 4249 (IQEL…TLGS). A Spectrin 3 repeat occupies 4428 to 4536 (RMEEVQKEAS…TVARQKQLEE (109 aa)). Serine 4458 and serine 4483 each carry phosphoserine. LRR repeat units follow at residues 4473–4496 (KAFL…LAGL), 4563–4583 (GVLG…QFML), and 4728–4751 (KKRL…RMNR). Residues 4759-4863 (TQQFQQMFDE…KTANRQSRLK (105 aa)) form a Spectrin 4 repeat. Serine 4921 carries the post-translational modification Phosphoserine. 3 LRR repeats span residues 5010-5035 (NKNL…YLRN), 5131-5153 (NKIQ…MLEE), and 5240-5263 (KDQV…LIQS). Spectrin repeat units follow at residues 5195-5300 (EDFY…QLQE), 5307-5409 (KFQD…QLED), 5414-5506 (AKQF…ADIT), 5631-5735 (RSQQ…ARLE), 5742-5844 (NQFW…ALDE), 5961-6066 (LAEK…KLED), 6071-6175 (AVQY…HKLE), 6181-6284 (LGQF…QQLQ), 6289-6395 (QAQG…KLEE), 6400-6503 (ATEF…RSLD), 6508-6614 (RAKQ…KLEE), 6621-6722 (QFMD…RLEQ), and 6726-6830 (QAEE…QRLE). Threonine 5394 is modified (phosphothreonine). LRR repeat units lie at residues 5654-5678 (MALG…AFSI) and 5763-5787 (AQLP…QLRE). Serine 5988 is modified (phosphoserine). At lysine 6166 the chain carries N6-acetyllysine. Residues 6452–6475 (RDQIIELDQTGNQLKFLSQKQDVV) form an LRR 23 repeat. The tract at residues 6904–6937 (SVEPTHAPFMEKSRSGSRKSLNQPTPPPMPILSQ) is disordered. At serine 6923 the chain carries Phosphoserine. EF-hand domains lie at 7001–7036 (HKKS…SKFP) and 7037–7072 (TTKL…NKDA). The Ca(2+) site is built by aspartate 7014, aspartate 7016, aspartate 7018, lysine 7020, glutamate 7025, aspartate 7050, aspartate 7052, aspartate 7054, tyrosine 7056, and glutamate 7061. The GAR domain occupies 7077 to 7155 (TDADKIEDEV…EFLVKNDPCR (79 aa)). Positions 7077–7354 (TDADKIEDEV…ASPRTPGPKR (278 aa)) are C-terminal tail. Residues 7171–7354 (PEGASQGMTP…ASPRTPGPKR (184 aa)) are disordered. Residues 7191–7225 (SSRAASPTRSSSSASQSNHSCTSMPSSPATPASGT) show a composition bias toward low complexity. Threonine 7220 is subject to Phosphothreonine. A compositionally biased stretch (polar residues) spans 7242-7261 (FHSSRTSLAGDTSNSSSPAS). 2 positions are modified to phosphoserine: serine 7245 and serine 7258. Over residues 7276 to 7290 (SRPGSRAGSRAGSRA) the composition is skewed to low complexity. The 4 X 4 AA tandem repeats of [GS]-S-R-[AR] stretch occupies residues 7279-7294 (GSRAGSRAGSRASSRR). Phosphoserine is present on residues serine 7296 and serine 7299. A compositionally biased stretch (polar residues) spans 7305–7315 (ETQSACSDTSE). Positions 7316–7327 (SSAAGGQGSSRR) are enriched in low complexity.

It belongs to the plakin or cytolinker family. As to quaternary structure, interacts with AXIN1, LRP6 and GOLGA4. Found in a complex composed of MACF1, APC, AXIN1, CTNNB1 and GSK3B. Interacts with MAPRE1, CLASP1 and CLASP2. Interacts with CAMSAP3. In terms of processing, phosphorylated on serine residues in the C-terminal tail by GSK3B. Phosphorylation inhibits microtubule-binding and this plays a critical role in bulge stem cell migration and skin wound repair. Wnt-signaling can repress phosphorylation. Enriched in the hair follicle stem cells (at protein level). Isoform 1 and isoform 2 are ubiquitous expressed, with higher levels seen in lung, heart, thymus, spleen and brain.

It is found in the cytoplasm. The protein localises to the cytoskeleton. Its subcellular location is the golgi apparatus. The protein resides in the cell membrane. It localises to the cell projection. It is found in the ruffle membrane. Functionally, F-actin-binding protein which plays a role in cross-linking actin to other cytoskeletal proteins and also binds to microtubules. Plays an important role in ERBB2-dependent stabilization of microtubules at the cell cortex. Acts as a positive regulator of Wnt receptor signaling pathway and is involved in the translocation of AXIN1 and its associated complex (composed of APC, CTNNB1 and GSK3B) from the cytoplasm to the cell membrane. Has actin-regulated ATPase activity and is essential for controlling focal adhesions (FAs) assembly and dynamics. Interaction with CAMSAP3 at the minus ends of non-centrosomal microtubules tethers microtubules minus-ends to actin filaments, regulating focal adhesion size and cell migration. May play role in delivery of transport vesicles containing GPI-linked proteins from the trans-Golgi network through its interaction with GOLGA4. Plays a key role in wound healing and epidermal cell migration. Required for efficient upward migration of bulge cells in response to wounding and this function is primarily rooted in its ability to coordinate microtubule dynamics and polarize hair follicle stem cells. As a regulator of actin and microtubule arrangement and stabilization, it plays an essential role in neurite outgrowth, branching and spine formation during brain development. This is Microtubule-actin cross-linking factor 1, isoforms 1/2/3/4 from Mus musculus (Mouse).